We begin with the raw amino-acid sequence, 321 residues long: Isoaspartyl peptidase (321 aa).

T179 serves as the catalytic Nucleophile. Substrate contacts are provided by residues 207 to 210 and 230 to 233; these read RVGD and TGTG.

Belongs to the Ntn-hydrolase family. Heterotetramer of two alpha and two beta chains arranged as a dimer of alpha/beta heterodimers. In terms of processing, autocleaved. Generates the alpha and beta subunits. The N-terminal residue of the beta subunit is thought to be responsible for the nucleophile hydrolase activity. Post-translationally, both subunits undergo further processing at their C-termini. The overexpressed alpha subunit seems to consist of residues 2-161, with an oxidized Met residue and a tightly coordinated Na(+), whereas the overexpressed beta subunit is processed to residue 315 and has 3 oxidized Met residues. Processing of the alpha subunit is inhibited by Zn(2+).

The enzyme catalyses Cleavage of a beta-linked Asp residue from the N-terminus of a polypeptide.. Functionally, degrades proteins damaged by L-isoaspartyl residue formation (also known as beta-Asp residues). Degrades L-isoaspartyl-containing di- and maybe also tripeptides. Also has L-asparaginase activity, although this may not be its principal function. In terms of biological role, may be involved in glutathione, and possibly other peptide, transport, although these results could also be due to polar effects of disruption. This Escherichia coli (strain K12) protein is Isoaspartyl peptidase (iaaA).